We begin with the raw amino-acid sequence, 550 residues long: FRPDRSHAKSARSVAETMGNYHPHGDASIYDTLVRMAQPWSLRYPLVDGQGNFGSPGNDPPAAMRYCLTGDALVRLPFGQSMRIGDVAPGARTNSDNAGELKVLDRHGDPVFADRLFHSGDHQTFRVQTAEGYEVTGTSNHPVLCLVNLAGVPTLLWMLIEEIRPDDYVVLQRAPPVESGPANWRDAMEALLLGAFISEGFMSESRAGFNNVDRDYFNAVVAAYDAVVGGKRYVAQRTIASGSVLNELDIHDVSALKGTRLGVLCGQRSADKSVPEWLWQSPAAVKRVFLQALFEGDGSCSALPRNTIQVSYSTRSRQLAIDVQQMLLEFGVISRRYRHAVGEYKVVITNRAQAELFATQIGFGGAKQSKLTRILGSLPPCAGMDTNHVPGLAAFIRSHCDSEWVDKEWLRKHNIDRLSRWRRDGAEILSRIANPDVRAIATDLTDGRFYYAQVTSVTEAGVQPVYSLRVDSEDHAFLTNGFVSHNTEARLTPLAMEMLREIDEETVDFIPNYDGRVQEPTVLPSRFPNLLANGSGGIAVGMATNIPPHN.

Residues 1–550 form the Topo IIA-type catalytic domain; sequence FRPDRSHAKS…GMATNIPPHN (550 aa). Tyr-66 functions as the O-(5'-phospho-DNA)-tyrosine intermediate in the catalytic mechanism. The DOD-type homing endonuclease domain occupies 192–332; sequence LLGAFISEGF…VQQMLLEFGV (141 aa).

Belongs to the type II topoisomerase GyrA/ParC subunit family. In terms of assembly, heterotetramer, composed of two GyrA and two GyrB chains. In the heterotetramer, GyrA contains the active site tyrosine that forms a transient covalent intermediate with DNA, while GyrB binds cofactors and catalyzes ATP hydrolysis. Post-translationally, this protein undergoes a protein self splicing that involves a post-translational excision of the intervening region (intein) followed by peptide ligation.

The protein localises to the cytoplasm. It catalyses the reaction ATP-dependent breakage, passage and rejoining of double-stranded DNA.. In terms of biological role, a type II topoisomerase that negatively supercoils closed circular double-stranded (ds) DNA in an ATP-dependent manner to modulate DNA topology and maintain chromosomes in an underwound state. Negative supercoiling favors strand separation, and DNA replication, transcription, recombination and repair, all of which involve strand separation. Also able to catalyze the interconversion of other topological isomers of dsDNA rings, including catenanes and knotted rings. Type II topoisomerases break and join 2 DNA strands simultaneously in an ATP-dependent manner. The protein is DNA gyrase subunit A (gyrA) of Mycobacterium gordonae.